Here is a 118-residue protein sequence, read N- to C-terminus: Large ribosomal subunit protein bL19 (118 aa).

The protein belongs to the bacterial ribosomal protein bL19 family.

In terms of biological role, this protein is located at the 30S-50S ribosomal subunit interface and may play a role in the structure and function of the aminoacyl-tRNA binding site. The sequence is that of Large ribosomal subunit protein bL19 from Helicobacter acinonychis (strain Sheeba).